A 589-amino-acid chain; its full sequence is Monocopper oxidase-like protein SKS1 (589 aa).

The first 24 residues, 1 to 24, serve as a signal peptide directing secretion; the sequence is MAATCSLLASFLLCFALLSAVSFA. Asn-62, Asn-111, Asn-204, Asn-243, Asn-260, Asn-296, Asn-345, Asn-365, Asn-433, and Asn-447 each carry an N-linked (GlcNAc...) asparagine glycan. The disordered stretch occupies residues 322 to 356; the sequence is LPVPKTDVSSPWSAMSQPKTIRQNTSASGARPNPQ. The segment covering 328-349 has biased composition (polar residues); that stretch reads DVSSPWSAMSQPKTIRQNTSAS. Position 455 (His-455) interacts with Cu cation. Residue Ser-563 is the site of GPI-anchor amidated serine attachment. Positions 564 to 589 are cleaved as a propeptide — removed in mature form; it reads AATSILNGHLKLMLLMVLLASVFRFC.

It belongs to the multicopper oxidase family. The cofactor is Cu cation.

The protein resides in the cell membrane. This chain is Monocopper oxidase-like protein SKS1 (SKS1), found in Arabidopsis thaliana (Mouse-ear cress).